We begin with the raw amino-acid sequence, 147 residues long: SPI-1 type 3 secretion system pilotin (147 aa).

An N-terminal signal peptide occupies residues 1–15 (MKKFYSCLPVFLLIG). A lipid anchor (N-palmitoyl cysteine) is attached at Cys16. Cys16 is lipidated: S-diacylglycerol cysteine.

The protein belongs to the InvH family.

The protein resides in the cell outer membrane. In terms of biological role, involved in the synthesis of the type III secretion system (T3SS), also called injectisome, which is used to inject bacterial effector proteins into eukaryotic host cells. Pilot protein that is required for the proper localization of the secretin InvG/SctC in the outer membrane. Necessary for efficient adherence and entry of these organisms into cultured epithelial cells. The sequence is that of SPI-1 type 3 secretion system pilotin from Salmonella typhimurium (strain SL1344).